The primary structure comprises 338 residues: Phosphate acyltransferase (338 aa).

The protein belongs to the PlsX family. As to quaternary structure, homodimer. Probably interacts with PlsY.

It localises to the cytoplasm. The enzyme catalyses a fatty acyl-[ACP] + phosphate = an acyl phosphate + holo-[ACP]. Its pathway is lipid metabolism; phospholipid metabolism. Its function is as follows. Catalyzes the reversible formation of acyl-phosphate (acyl-PO(4)) from acyl-[acyl-carrier-protein] (acyl-ACP). This enzyme utilizes acyl-ACP as fatty acyl donor, but not acyl-CoA. The protein is Phosphate acyltransferase of Salinibacter ruber (strain DSM 13855 / M31).